Here is a 307-residue protein sequence, read N- to C-terminus: MmsAB operon regulatory protein (307 aa).

Residues 201–299 form the HTH araC/xylS-type domain; it reads DGLHAYMREH…GLSPSAYRQR (99 aa). DNA-binding regions (H-T-H motif) lie at residues 218–239 and 266–289; these read ERLA…KAIT and VARV…SKVM.

In terms of biological role, regulatory protein for the mmsAB operon. Activates the transcription of the mmsAB genes. This chain is MmsAB operon regulatory protein, found in Pseudomonas aeruginosa (strain ATCC 15692 / DSM 22644 / CIP 104116 / JCM 14847 / LMG 12228 / 1C / PRS 101 / PAO1).